The following is a 337-amino-acid chain: Methionyl-tRNA formyltransferase (337 aa).

A (6S)-5,6,7,8-tetrahydrofolate-binding site is contributed by 116-119; it reads SILP.

It belongs to the Fmt family.

It carries out the reaction L-methionyl-tRNA(fMet) + (6R)-10-formyltetrahydrofolate = N-formyl-L-methionyl-tRNA(fMet) + (6S)-5,6,7,8-tetrahydrofolate + H(+). In terms of biological role, attaches a formyl group to the free amino group of methionyl-tRNA(fMet). The formyl group appears to play a dual role in the initiator identity of N-formylmethionyl-tRNA by promoting its recognition by IF2 and preventing the misappropriation of this tRNA by the elongation apparatus. The chain is Methionyl-tRNA formyltransferase from Desulfovibrio desulfuricans (strain ATCC 27774 / DSM 6949 / MB).